We begin with the raw amino-acid sequence, 488 residues long: Annexin A7 (488 aa).

Positions 1–18 (MSYPGYPPTGYPPFPGYP) are enriched in pro residues. 2 disordered regions span residues 1–49 (MSYP…YPQV) and 71–150 (GYPG…NTES). The interval 1–143 (MSYPGYPPTG…QYPGGQPTYP (143 aa)) is repeat-rich region. The tract at residues 5–20 (GYPPTGYPPFPGYPPA) is 3 X 5 AA tandem repeats of G-Y-P-P-X. Gly residues predominate over residues 89–102 (PGQGFGVPPGGAGF). Annexin repeat units lie at residues 185-256 (FDAM…ALFM), 257-328 (PPTY…SMCQ), 340-412 (QMAQ…TILQ), and 416-487 (NRPA…AIVG). N6-acetyllysine is present on K233.

Belongs to the annexin family. Interacts with PDCD6.

Calcium/phospholipid-binding protein which promotes membrane fusion and is involved in exocytosis. The sequence is that of Annexin A7 (ANXA7) from Macaca fascicularis (Crab-eating macaque).